We begin with the raw amino-acid sequence, 229 residues long: Lipoprotein-releasing system ATP-binding protein LolD (229 aa).

The ABC transporter domain maps to 9 to 229; that stretch reads LRLEQVARRY…TIREGQIVPA (221 aa). An ATP-binding site is contributed by 45 to 52; it reads APSGTGKS.

It belongs to the ABC transporter superfamily. Lipoprotein translocase (TC 3.A.1.125) family. In terms of assembly, the complex is composed of two ATP-binding proteins (LolD) and two transmembrane proteins (LolC and LolE).

The protein localises to the cell inner membrane. Its function is as follows. Part of the ABC transporter complex LolCDE involved in the translocation of mature outer membrane-directed lipoproteins, from the inner membrane to the periplasmic chaperone, LolA. Responsible for the formation of the LolA-lipoprotein complex in an ATP-dependent manner. The protein is Lipoprotein-releasing system ATP-binding protein LolD of Granulibacter bethesdensis (strain ATCC BAA-1260 / CGDNIH1).